The chain runs to 336 residues: MTKVAVLGSGSWGTAFANVVADAGIAETVLWGRRPEIVEAINTKHENPDYLPGITLNPRLTATTDVAEAMAGADFTVIAVPAQTLRTNLAAWSEALDPGTVVVSLMKGIEVGTCLRMSEVIAEVLELPDHRIAVLSGPNLAREIAERQPATAVVACTDEQTAVRLQHLCKSPYFRPYTNTDVIGVELGGAVKNVIALAVGVAVGMGFGDNAKAALITRGLAETVRLAVALGADEHTLAGLAGLGDLVATCSSPLSRNRTFGEKLGSGMTVDEVIAETKQTAEGVKSSTSILELARAHGVEMPITEAVVAMMYHGLPPAEALLAFMSRSAKPERYGV.

S11, W12, R33, R34, and K107 together coordinate NADPH. Residues K107 and G137 each coordinate sn-glycerol 3-phosphate. A141 provides a ligand contact to NADPH. Positions 192, 245, 255, 256, and 257 each coordinate sn-glycerol 3-phosphate. K192 acts as the Proton acceptor in catalysis. Residue R256 coordinates NADPH. E282 contributes to the NADPH binding site.

This sequence belongs to the NAD-dependent glycerol-3-phosphate dehydrogenase family.

The protein resides in the cytoplasm. The enzyme catalyses sn-glycerol 3-phosphate + NAD(+) = dihydroxyacetone phosphate + NADH + H(+). The catalysed reaction is sn-glycerol 3-phosphate + NADP(+) = dihydroxyacetone phosphate + NADPH + H(+). Its pathway is membrane lipid metabolism; glycerophospholipid metabolism. Its function is as follows. Catalyzes the reduction of the glycolytic intermediate dihydroxyacetone phosphate (DHAP) to sn-glycerol 3-phosphate (G3P), the key precursor for phospholipid synthesis. This chain is Glycerol-3-phosphate dehydrogenase [NAD(P)+], found in Thermobifida fusca (strain YX).